The chain runs to 371 residues: Chaperone protein DnaJ (371 aa).

The J domain maps to 4–68 (DYYQILGVSK…QKRAAYDRFG (65 aa)). Residues 134-212 (GIEKNISFSS…CHGMGRYHKQ (79 aa)) form a CR-type zinc finger. The Zn(2+) site is built by C147, C150, C164, C167, C186, C189, C200, and C203. CXXCXGXG motif repeat units lie at residues 147 to 154 (CDTCHGTG), 164 to 171 (CDACGGVG), 186 to 193 (CHKCQGNG), and 200 to 207 (CKKCHGMG).

The protein belongs to the DnaJ family. In terms of assembly, homodimer. It depends on Zn(2+) as a cofactor.

The protein localises to the cytoplasm. Its function is as follows. Participates actively in the response to hyperosmotic and heat shock by preventing the aggregation of stress-denatured proteins and by disaggregating proteins, also in an autonomous, DnaK-independent fashion. Unfolded proteins bind initially to DnaJ; upon interaction with the DnaJ-bound protein, DnaK hydrolyzes its bound ATP, resulting in the formation of a stable complex. GrpE releases ADP from DnaK; ATP binding to DnaK triggers the release of the substrate protein, thus completing the reaction cycle. Several rounds of ATP-dependent interactions between DnaJ, DnaK and GrpE are required for fully efficient folding. Also involved, together with DnaK and GrpE, in the DNA replication of plasmids through activation of initiation proteins. In Rickettsia felis (strain ATCC VR-1525 / URRWXCal2) (Rickettsia azadi), this protein is Chaperone protein DnaJ.